Consider the following 422-residue polypeptide: MSSSCSGLSRVLVAVATALVSASSPCPQAWGPPGVQYGQPGRSVKLCCPGVTAGDPVSWFRDGEPKLLQGPDSGLGHELVLAQADSTDEGTYICQTLDGALGGTVTLQLGYPPARPVVSCQAADYENFSCTWSPSQISGLPTRYLTSYRKKTVLGADSQRRSPSTGPWPCPQDPLGAARCVVHGAEFWSQYRINVTEVNPLGASTRLLDVSLQSILRPDPPQGLRVESVPGYPRRLRASWTYPASWPCQPHFLLKFRLQYRPAQHPAWSTVEPAGLEEVITDAVAGLPHAVRVSARDFLDAGTWSTWSPEAWGTPSTGTIPKEIPAWGQLHTQPEVEPQVDSPAPPRPSLQPHPRLLDHRDSVEQVAVLASLGILSFLGLVAGALALGLWLRLRRGGKDGSPKPGFLASVIPVDRRPGAPNL.

A signal peptide spans 1-22 (MSSSCSGLSRVLVAVATALVSA). At 24-370 (SPCPQAWGPP…DSVEQVAVLA (347 aa)) the chain is on the extracellular side. Positions 27 to 110 (PQAWGPPGVQ…LGGTVTLQLG (84 aa)) constitute an Ig-like C2-type domain. 3 cysteine pairs are disulfide-bonded: Cys-48–Cys-94, Cys-120–Cys-130, and Cys-170–Cys-180. Fibronectin type-III domains are found at residues 112 to 219 (PPAR…LRPD) and 220 to 317 (PPQG…TPST). Residue Asn-127 is glycosylated (N-linked (GlcNAc...) asparagine). Asn-194 is a glycosylation site (N-linked (GlcNAc...) asparagine). A WSXWS motif motif is present at residues 304–308 (WSTWS). Residues 335–355 (EVEPQVDSPAPPRPSLQPHPR) are disordered. Residues 371–391 (SLGILSFLGLVAGALALGLWL) form a helical membrane-spanning segment. The Cytoplasmic segment spans residues 392-422 (RLRRGGKDGSPKPGFLASVIPVDRRPGAPNL). Residues 398-422 (KDGSPKPGFLASVIPVDRRPGAPNL) are disordered. The segment covering 413-422 (VDRRPGAPNL) has biased composition (basic and acidic residues).

This sequence belongs to the type I cytokine receptor family. Type 3 subfamily. On IL11 binding, forms a multimer complex with IL6ST/gp130. Post-translationally, a short soluble form is also released from the membrane by proteolysis. The sIL11RA is formed either by limited proteolysis of membrane-bound receptors, a process referred to as ectodomain shedding, or directly secreted from the cells after alternative mRNA splicing. mIL11RA is cleaved by the proteases ADAM10, ELANE and PRTN3. As to expression, expressed in a number of cell lines, including the myelogenous leukemia cell line K-562, the megakaryocytic leukemia cell line M-07e, the erythroleukemia cell line TF-1, and the osteosarcoma cell lines, MG-63 and SaOS-2. Also expressed in normal and malignant prostate epithelial cell lines. Expression levels are increased in prostate carcinoma.

Its subcellular location is the membrane. The protein localises to the secreted. Functionally, receptor for interleukin-11 (IL11). The receptor systems for IL6, LIF, OSM, CNTF, IL11 and CT1 can utilize IL6ST for initiating signal transmission. The IL11/IL11RA/IL6ST complex may be involved in the control of proliferation and/or differentiation of skeletogenic progenitor or other mesenchymal cells. Essential for the normal development of craniofacial bones and teeth. Restricts suture fusion and tooth number. In terms of biological role, soluble form of IL11 receptor (sIL11RA) that acts as an agonist of IL11 activity. The IL11:sIL11RA complex binds to IL6ST/gp130 on cell surfaces and induces signaling also on cells that do not express membrane-bound IL11RA in a process called IL11 trans-signaling. This is Interleukin-11 receptor subunit alpha from Homo sapiens (Human).